The chain runs to 384 residues: Cytochrome b (384 aa).

4 helical membrane passes run 32 to 52, 76 to 98, 113 to 133, and 179 to 199; these read FGSL…FLAM, WLLR…LHMA, LWNM…MGYC, and FFSL…LHLL. Heme b is bound by residues histidine 82 and histidine 96. Histidine 183 and histidine 197 together coordinate heme b. Histidine 202 is a binding site for a ubiquinone. The next 4 membrane-spanning stretches (helical) occupy residues 225-245, 289-309, 321-341, and 348-368; these read FLFK…FLIS, MMGV…PFVD, LSKI…LIGA, and YIII…ILLP.

It belongs to the cytochrome b family. In terms of assembly, fungal cytochrome b-c1 complex contains 10 subunits; 3 respiratory subunits, 2 core proteins and 5 low-molecular weight proteins. Cytochrome b-c1 complex is a homodimer. The cofactor is heme b.

The protein localises to the mitochondrion inner membrane. Component of the ubiquinol-cytochrome c reductase complex (complex III or cytochrome b-c1 complex) that is part of the mitochondrial respiratory chain. The b-c1 complex mediates electron transfer from ubiquinol to cytochrome c. Contributes to the generation of a proton gradient across the mitochondrial membrane that is then used for ATP synthesis. The protein is Cytochrome b (COB) of Starmerella bacillaris (Yeast).